A 369-amino-acid chain; its full sequence is Polycomb group protein FERTILIZATION-INDEPENDENT ENDOSPERM (369 aa).

7 WD repeats span residues 31 to 73 (EGKK…AISA), 81 to 123 (DKEE…IHKS), 126 to 166 (GHGD…CILI), 172 to 212 (GHRY…TYVE), 238 to 275 (IHTN…NSPG), 287 to 328 (VPMC…PVLI), and 335 to 368 (QSKS…DVIT).

The protein belongs to the WD repeat ESC family. As to quaternary structure, interacts directly with MEA. These two proteins are probably indirectly associated with FIS2. In plants, PcG complexes are probably composed of a member of the EZ family (CLF or MEA), FIE, and a member of the VEFS family (FIS2, VRN2 or EMF2). Component of the plant homeodomain / polycomb repressive complex 2 (PHD-PRC2) large complex during prolonged cold, composed of core PRC2 components (VRN2, EZA1, FIE and MSI1), and three related PHD finger proteins (VIL1, VIL2 and VIN3) that mediates histone H3 trimethylation on 'Lys-27' (H3K27me3). Binds to ALP1. In terms of tissue distribution, expressed in cauline leaves, root and stems. In the male reproductive organ, it is expressed in the developing anther; and is abundant in microspore mother cells, in microsporocytes and in the tapetum, but is absent from vascular bundles, the connective tissue and the filament. It is also absent from pollen grains at subsequent developmental stages. In the developing female reproductive organs, it is highly expressed in all cells of the young ovules primordium before archesporial differentiation. Then, it is highly expressed in the ovule sporophytic tissue and the megaspore mother cell before meiosis, but is absent from placenta or the developing carpel. Then, it decreases.

Its subcellular location is the nucleus. Its function is as follows. Polycomb group (PcG) protein. PcG proteins act by forming multiprotein complexes, which are required to maintain the transcriptionally repressive state of homeotic genes throughout development. PcG proteins are not required to initiate repression, but to maintain it during later stages of development. They probably act via the methylation of histones, rendering chromatin heritably changed in its expressibility. Required to prevent the proliferation of the central cell by repressing unknown target genes before fertilization. Probably also involved in floral repression mechanism established during early plant development. Regulates the anteroposterior organization of the endosperm. Interacts with the promoter and represses the transcription of genes such as PHE1, that are paternally active and maternally silenced. This Arabidopsis thaliana (Mouse-ear cress) protein is Polycomb group protein FERTILIZATION-INDEPENDENT ENDOSPERM (FIE).